The primary structure comprises 312 residues: Uracil-DNA glycosylase (312 aa).

The segment covering 1 to 11 (MSSACDHETEA) has biased composition (basic and acidic residues). Positions 1 to 61 (MSSACDHETE…PPKRRRPCGL (61 aa)) are disordered. Residues 22–33 (EENGSNSSTPTS) show a composition bias toward polar residues. The Proton acceptor role is filled by D155.

Belongs to the uracil-DNA glycosylase (UDG) superfamily. UNG family.

It is found in the host nucleus. The enzyme catalyses Hydrolyzes single-stranded DNA or mismatched double-stranded DNA and polynucleotides, releasing free uracil.. Functionally, excises uracil residues from the DNA which can arise as a result of misincorporation of dUMP residues by DNA polymerase or deamination of cytosines. Therefore may reduce deleterious uracil incorporation into the viral genome, particularly in terminally differentiated cells which lack DNA repair enzymes. This chain is Uracil-DNA glycosylase (61), found in Equine herpesvirus 1 (strain V592) (EHV-1).